Here is a 534-residue protein sequence, read N- to C-terminus: CTP synthase (534 aa).

Positions 1–267 (MTKYIFVTGG…DQIVCDHLKL (267 aa)) are amidoligase domain. Serine 13 provides a ligand contact to CTP. Serine 13 contributes to the UTP binding site. 14–19 (SIGKGI) is an ATP binding site. Tyrosine 54 is an L-glutamine binding site. Aspartate 71 provides a ligand contact to ATP. Residues aspartate 71 and glutamate 141 each coordinate Mg(2+). Residues 148–150 (DIE), 188–193 (KTKPTQ), and lysine 224 contribute to the CTP site. UTP contacts are provided by residues 188–193 (KTKPTQ) and lysine 224. 240 to 242 (RDV) is an ATP binding site. The region spanning 292 to 534 (KIALVGKYVE…FVTAAIKNSN (243 aa)) is the Glutamine amidotransferase type-1 domain. Glycine 354 serves as a coordination point for L-glutamine. The Nucleophile; for glutamine hydrolysis role is filled by cysteine 381. Residues 382–385 (LGMQ), glutamate 405, and arginine 463 contribute to the L-glutamine site. Catalysis depends on residues histidine 508 and glutamate 510.

The protein belongs to the CTP synthase family. As to quaternary structure, homotetramer.

It carries out the reaction UTP + L-glutamine + ATP + H2O = CTP + L-glutamate + ADP + phosphate + 2 H(+). The catalysed reaction is L-glutamine + H2O = L-glutamate + NH4(+). The enzyme catalyses UTP + NH4(+) + ATP = CTP + ADP + phosphate + 2 H(+). The protein operates within pyrimidine metabolism; CTP biosynthesis via de novo pathway; CTP from UDP: step 2/2. With respect to regulation, allosterically activated by GTP, when glutamine is the substrate; GTP has no effect on the reaction when ammonia is the substrate. The allosteric effector GTP functions by stabilizing the protein conformation that binds the tetrahedral intermediate(s) formed during glutamine hydrolysis. Inhibited by the product CTP, via allosteric rather than competitive inhibition. Catalyzes the ATP-dependent amination of UTP to CTP with either L-glutamine or ammonia as the source of nitrogen. Regulates intracellular CTP levels through interactions with the four ribonucleotide triphosphates. The sequence is that of CTP synthase from Streptococcus pyogenes serotype M18 (strain MGAS8232).